A 141-amino-acid polypeptide reads, in one-letter code: Hemoglobin subunit alpha-1 (141 aa).

Residues 1-141 (VLSPADKNNV…VSTVLTSKYR (141 aa)) enclose the Globin domain. Residue His58 coordinates O2. Residue His87 participates in heme b binding.

It belongs to the globin family. In terms of assembly, heterotetramer of two alpha chains and two beta chains. As to expression, red blood cells.

Its function is as follows. Involved in oxygen transport from the lung to the various peripheral tissues. This Varecia variegata (Black-and-white ruffed lemur) protein is Hemoglobin subunit alpha-1.